The sequence spans 267 residues: Thiazole synthase (267 aa).

The active-site Schiff-base intermediate with DXP is the Lys101. Residues Gly162, 188–189 (AG), and 210–211 (NT) each bind 1-deoxy-D-xylulose 5-phosphate. A disordered region spans residues 247–267 (HASPSSPAAGVPCLPDPEVPV).

This sequence belongs to the ThiG family. As to quaternary structure, homotetramer. Forms heterodimers with either ThiH or ThiS.

It is found in the cytoplasm. The catalysed reaction is [ThiS sulfur-carrier protein]-C-terminal-Gly-aminoethanethioate + 2-iminoacetate + 1-deoxy-D-xylulose 5-phosphate = [ThiS sulfur-carrier protein]-C-terminal Gly-Gly + 2-[(2R,5Z)-2-carboxy-4-methylthiazol-5(2H)-ylidene]ethyl phosphate + 2 H2O + H(+). The protein operates within cofactor biosynthesis; thiamine diphosphate biosynthesis. Catalyzes the rearrangement of 1-deoxy-D-xylulose 5-phosphate (DXP) to produce the thiazole phosphate moiety of thiamine. Sulfur is provided by the thiocarboxylate moiety of the carrier protein ThiS. In vitro, sulfur can be provided by H(2)S. This chain is Thiazole synthase, found in Deinococcus geothermalis (strain DSM 11300 / CIP 105573 / AG-3a).